The chain runs to 188 residues: PRA1 family protein 3 (188 aa).

M1 bears the N-acetylmethionine mark. The Cytoplasmic portion of the chain corresponds to 1-35 (MEVQVAPLRSWEDFFPGSDRFGRPDFKDISKWNNR). The next 2 membrane-spanning stretches (helical) occupy residues 36–56 (VVNNLLYYQTNYLMVAAAVVA) and 57–77 (IVGFLSPLNMLIGGTVVILVF). Topologically, residues 78–93 (LGFVWVSHNKDILRRM) are cytoplasmic. A run of 2 helical transmembrane segments spans residues 94-114 (KKQYPTTFVIVIMLSSYFLIS) and 115-135 (YLGDVMVFMFGITLPLLLMFI). The Cytoplasmic segment spans residues 136 to 188 (HASLRLRNIKNKLENKKEEIGLKKTPMGIILDALEQQEDNINKLASYIPKVKE). The interval 136-188 (HASLRLRNIKNKLENKKEEIGLKKTPMGIILDALEQQEDNINKLASYIPKVKE) is targeting to endoplasmic reticulum membrane.

It belongs to the PRA1 family. As to quaternary structure, binds to prenylated RAB and Ras superfamily members.

It localises to the endoplasmic reticulum membrane. The protein resides in the cell membrane. It is found in the cytoplasm. The protein localises to the cytoskeleton. Functionally, regulates intracellular concentrations of taurine and glutamate. Negatively modulates SLC1A1/EAAC1 glutamate transport activity by decreasing its affinity for glutamate in a PKC activity-dependent manner. May be involved in membrane traffic. The polypeptide is PRA1 family protein 3 (ARL6IP5) (Gallus gallus (Chicken)).